Consider the following 432-residue polypeptide: UPF0597 protein APJL_1638 (432 aa).

The protein belongs to the UPF0597 family.

This Actinobacillus pleuropneumoniae serotype 3 (strain JL03) protein is UPF0597 protein APJL_1638.